The primary structure comprises 89 residues: Mu-like prophage FluMu DNA-binding protein Ner (89 aa).

A DNA-binding region (H-T-H motif) is located at residues 57–76 (ERLVANAIGVPPEVIWAGRF).

It belongs to the ner transcriptional regulatory family.

Negative regulator of transcription starting from the Pe and Pc promoters of Mu. Also negatively regulates its own gene transcription. The protein is Mu-like prophage FluMu DNA-binding protein Ner (nlp) of Haemophilus influenzae (strain ATCC 51907 / DSM 11121 / KW20 / Rd).